A 54-amino-acid chain; its full sequence is UPF0391 membrane protein Rmet_0093 (54 aa).

A run of 2 helical transmembrane segments spans residues 5–25 and 30–50; these read ALVF…GIAA and IAKI…VMGL.

It belongs to the UPF0391 family.

Its subcellular location is the cell membrane. In Cupriavidus metallidurans (strain ATCC 43123 / DSM 2839 / NBRC 102507 / CH34) (Ralstonia metallidurans), this protein is UPF0391 membrane protein Rmet_0093.